The primary structure comprises 213 residues: MYQDKILVRQLGLQPYEPISRAMHEFTDTRDNSTLDEIWLVEHYPVFTQGQAGKAEHILMPGDIPVIQSDRGGQVTYHGPGQQVMYVLLNLKRRKLGVRELVTLLEQTVVNTLAELGIEAHPRADAPGVYVGEKKICSLGLRIRRGCSFHGLALNVNMDLSPFLRINPCGYAGMEMAKISQWKPEATTNNIAPRLLENILALLNNPDFEYITA.

The BPL/LPL catalytic domain occupies 32 to 207 (NSTLDEIWLV…NILALLNNPD (176 aa)). Residues 71–78 (RGGQVTYH), 138–140 (SLG), and 151–153 (GLA) contribute to the substrate site. The active-site Acyl-thioester intermediate is the Cys169.

It belongs to the LipB family.

It is found in the cytoplasm. The enzyme catalyses octanoyl-[ACP] + L-lysyl-[protein] = N(6)-octanoyl-L-lysyl-[protein] + holo-[ACP] + H(+). It functions in the pathway protein modification; protein lipoylation via endogenous pathway; protein N(6)-(lipoyl)lysine from octanoyl-[acyl-carrier-protein]: step 1/2. Functionally, catalyzes the transfer of endogenously produced octanoic acid from octanoyl-acyl-carrier-protein onto the lipoyl domains of lipoate-dependent enzymes. Lipoyl-ACP can also act as a substrate although octanoyl-ACP is likely to be the physiological substrate. This chain is Octanoyltransferase, found in Shigella flexneri serotype 5b (strain 8401).